Reading from the N-terminus, the 315-residue chain is tRNA uridine(34) hydroxylase (315 aa).

Residues 145–235 form the Rhodanese domain; sequence MKNDFILVDM…GIIEYVNFIK (91 aa). C199 acts as the Cysteine persulfide intermediate in catalysis.

It belongs to the TrhO family.

The catalysed reaction is uridine(34) in tRNA + AH2 + O2 = 5-hydroxyuridine(34) in tRNA + A + H2O. Its function is as follows. Catalyzes oxygen-dependent 5-hydroxyuridine (ho5U) modification at position 34 in tRNAs. The sequence is that of tRNA uridine(34) hydroxylase from Wigglesworthia glossinidia brevipalpis.